Here is a 523-residue protein sequence, read N- to C-terminus: Transcription initiation factor TFIID subunit 4 (523 aa).

Disordered stretches follow at residues 1 to 100 (MSLP…AASD) and 185 to 241 (ASVE…VQGG). Positions 58–77 (QMQPPRQPIQQQMQHFQSPS) are enriched in low complexity. Over residues 78 to 87 (PMAPQGPPGT) the composition is skewed to pro residues. Positions 101–199 (DKNVTKCVRF…VNPPPGYVFN (99 aa)) constitute a TAFH domain. The segment covering 204–213 (PGPPQPPPPQ) has biased composition (pro residues). A compositionally biased stretch (low complexity) spans 214 to 236 (QQSQQQPPLEMRQIPNPNQIPPQ). The tract at residues 329–383 (LKPDEVLNRITKRMMSSCSVEEEALVAISDAVESHLRELITLMAGVAEHRVESLR) is histone-fold. Positions 333-382 (EVLNRITKRMMSSCSVEEEALVAISDAVESHLRELITLMAGVAEHRVESL) are necessary and sufficient for interaction with oma-1. Residues 407 to 435 (QEEELRESREKESLIRMSKNKNSGKETIE) are disordered.

This sequence belongs to the TAF4 family. In terms of assembly, component of the TFIID basal transcription factor complex, composed of TATA-box-binding protein tbp-1, and a number of TBP-associated factors (TAFs). Interacts (via histone-fold domain) with oma-1 (via histone-fold domain). May also interact with oma-2. Interacts (via histone-fold domain) with taf-12 (via the histone-fold domain).

Its subcellular location is the nucleus. The protein resides in the cytoplasm. In terms of biological role, the TFIID basal transcription factor complex plays a major role in the initiation of RNA polymerase II (Pol II)-dependent transcription. TFIID recognizes and binds promoters via its subunit tbp-1, a TATA-box-binding protein, and promotes assembly of the pre-initiation complex (PIC). The TFIID complex consists of tbp-1 and TBP-associated factors (TAFs), including taf-4. Essential for early embryonic development, probably acting via activating transcription initiation by RNA polymerase II, as part of the TFIID complex. In early embryos, but not oocytes, remains, presumably inactive, in the cytoplasm as a result of binding to oma-1. Upon degradation of oma-1, taf-4 is released and bound by taf-12, and the taf-4/12 heterodimer translocates to the nucleus and transcriptional repression is relieved. Involved in lifespan extension in a manner dependent upon mitochondrial function. Plays a role in modulating polyribosome formation. This Caenorhabditis elegans protein is Transcription initiation factor TFIID subunit 4.